The following is a 379-amino-acid chain: Queuine tRNA-ribosyltransferase (379 aa).

Residue D94 is the Proton acceptor of the active site. Substrate contacts are provided by residues 94-98 (DSGGF), D148, Q191, and G218. The RNA binding stretch occupies residues 249–255 (GVGSPDA). Catalysis depends on D268, which acts as the Nucleophile. The interval 273 to 277 (TRIAR) is RNA binding; important for wobble base 34 recognition. Zn(2+) contacts are provided by C306, C308, C311, and H337.

It belongs to the queuine tRNA-ribosyltransferase family. In terms of assembly, homodimer. Within each dimer, one monomer is responsible for RNA recognition and catalysis, while the other monomer binds to the replacement base PreQ1. Zn(2+) is required as a cofactor.

The enzyme catalyses 7-aminomethyl-7-carbaguanine + guanosine(34) in tRNA = 7-aminomethyl-7-carbaguanosine(34) in tRNA + guanine. Its pathway is tRNA modification; tRNA-queuosine biosynthesis. In terms of biological role, catalyzes the base-exchange of a guanine (G) residue with the queuine precursor 7-aminomethyl-7-deazaguanine (PreQ1) at position 34 (anticodon wobble position) in tRNAs with GU(N) anticodons (tRNA-Asp, -Asn, -His and -Tyr). Catalysis occurs through a double-displacement mechanism. The nucleophile active site attacks the C1' of nucleotide 34 to detach the guanine base from the RNA, forming a covalent enzyme-RNA intermediate. The proton acceptor active site deprotonates the incoming PreQ1, allowing a nucleophilic attack on the C1' of the ribose to form the product. After dissociation, two additional enzymatic reactions on the tRNA convert PreQ1 to queuine (Q), resulting in the hypermodified nucleoside queuosine (7-(((4,5-cis-dihydroxy-2-cyclopenten-1-yl)amino)methyl)-7-deazaguanosine). The polypeptide is Queuine tRNA-ribosyltransferase (Staphylococcus haemolyticus (strain JCSC1435)).